The sequence spans 61 residues: Small ribosomal subunit protein uS14 (61 aa).

C24, C27, C40, and C43 together coordinate Zn(2+).

The protein belongs to the universal ribosomal protein uS14 family. Zinc-binding uS14 subfamily. As to quaternary structure, part of the 30S ribosomal subunit. Contacts proteins S3 and S10. The cofactor is Zn(2+).

Functionally, binds 16S rRNA, required for the assembly of 30S particles and may also be responsible for determining the conformation of the 16S rRNA at the A site. The polypeptide is Small ribosomal subunit protein uS14 (Thermotoga maritima (strain ATCC 43589 / DSM 3109 / JCM 10099 / NBRC 100826 / MSB8)).